The primary structure comprises 255 residues: 5'-nucleotidase SurE (255 aa).

A divalent metal cation is bound by residues D8, D9, S39, and N91.

This sequence belongs to the SurE nucleotidase family. A divalent metal cation serves as cofactor.

Its subcellular location is the cytoplasm. It carries out the reaction a ribonucleoside 5'-phosphate + H2O = a ribonucleoside + phosphate. Functionally, nucleotidase that shows phosphatase activity on nucleoside 5'-monophosphates. The sequence is that of 5'-nucleotidase SurE from Nitrosospira multiformis (strain ATCC 25196 / NCIMB 11849 / C 71).